Consider the following 276-residue polypeptide: Large ribosomal subunit protein uL2 (276 aa).

A disordered region spans residues 219 to 276 (TVRGSVMNPNDHPHGGGEGKQPIGRKQQMTPWGKKARGIKTRDKKKASTSMIVRRRNG). Residues 252–276 (KKARGIKTRDKKKASTSMIVRRRNG) are compositionally biased toward basic residues.

It belongs to the universal ribosomal protein uL2 family. In terms of assembly, part of the 50S ribosomal subunit. Forms a bridge to the 30S subunit in the 70S ribosome.

One of the primary rRNA binding proteins. Required for association of the 30S and 50S subunits to form the 70S ribosome, for tRNA binding and peptide bond formation. It has been suggested to have peptidyltransferase activity; this is somewhat controversial. Makes several contacts with the 16S rRNA in the 70S ribosome. The sequence is that of Large ribosomal subunit protein uL2 from Acholeplasma laidlawii (strain PG-8A).